The sequence spans 317 residues: MQRSLKWFASTTTVAMLFVLIGGALVTKTDSGMGCGRSWPLCHGQWIPDDITPQLVIELSHRLVSGLAAIMVLILCIRSWRVMGHVRETKPLAVLSFVFLVLQSLIGAAAVVWGQSDFVMALHFGISLISFAAVLLLTLLIFVVDKKFSPTSLQLDGQMRFHIYGIIIYSYLVVYTGALVRHTNASLACPSWPLCAKSRLLPVQFHEWVQMGHRLAAAVIIIWIAVATVHAARYYREQPVIYYGWIISLLLVLAQMVTGALVVFTELNLYISLAHAFFISCLFGVLSYLLLLALRTRRRPATAAGRSVEDTASAPLK.

Residues 1-6 lie on the Cytoplasmic side of the membrane; it reads MQRSLK. The helical transmembrane segment at 7–27 threads the bilayer; the sequence is WFASTTTVAMLFVLIGGALVT. Over 28-54 the chain is Extracellular; the sequence is KTDSGMGCGRSWPLCHGQWIPDDITPQ. An intrachain disulfide couples Cys-35 to Cys-42. A helical transmembrane segment spans residues 55-75; the sequence is LVIELSHRLVSGLAAIMVLIL. Glu-58 is a catalytic residue. His-61 provides a ligand contact to heme o. The Cytoplasmic segment spans residues 76–91; it reads CIRSWRVMGHVRETKP. A helical membrane pass occupies residues 92–112; that stretch reads LAVLSFVFLVLQSLIGAAAVV. At 113–123 the chain is on the extracellular side; that stretch reads WGQSDFVMALH. Residue His-123 coordinates heme o. A helical membrane pass occupies residues 124-144; the sequence is FGISLISFAAVLLLTLLIFVV. Residues 145 to 159 lie on the Cytoplasmic side of the membrane; the sequence is DKKFSPTSLQLDGQM. Residues 160 to 180 traverse the membrane as a helical segment; sequence RFHIYGIIIYSYLVVYTGALV. The Extracellular segment spans residues 181 to 214; the sequence is RHTNASLACPSWPLCAKSRLLPVQFHEWVQMGHR. A disulfide bridge links Cys-189 with Cys-195. Residue His-213 coordinates heme b. The chain crosses the membrane as a helical span at residues 215 to 235; that stretch reads LAAAVIIIWIAVATVHAARYY. Residues 236–243 lie on the Cytoplasmic side of the membrane; that stretch reads REQPVIYY. Residues 244-264 traverse the membrane as a helical segment; sequence GWIISLLLVLAQMVTGALVVF. Topologically, residues 265 to 272 are extracellular; sequence TELNLYIS. The helical transmembrane segment at 273-293 threads the bilayer; the sequence is LAHAFFISCLFGVLSYLLLLA. Heme b is bound at residue His-275. At 294 to 317 the chain is on the cytoplasmic side; the sequence is LRTRRRPATAAGRSVEDTASAPLK.

It belongs to the COX15/CtaA family. Type 1 subfamily. In terms of assembly, interacts with CtaB. The cofactor is heme b.

It localises to the cell membrane. It carries out the reaction Fe(II)-heme o + 2 A + H2O = Fe(II)-heme a + 2 AH2. The protein operates within porphyrin-containing compound metabolism; heme A biosynthesis; heme A from heme O: step 1/1. Its function is as follows. Catalyzes the conversion of heme O to heme A by two successive hydroxylations of the methyl group at C8. The first hydroxylation forms heme I, the second hydroxylation results in an unstable dihydroxymethyl group, which spontaneously dehydrates, resulting in the formyl group of heme A. In Geobacillus thermodenitrificans, this protein is Heme A synthase.